Consider the following 320-residue polypeptide: Malate dehydrogenase 2 (320 aa).

NAD(+) contacts are provided by residues 10 to 15 and aspartate 34; that span reads GAGQIG. Residues arginine 83 and arginine 89 each contribute to the substrate site. NAD(+) is bound by residues asparagine 96 and 119-121; that span reads ITN. Residues asparagine 121 and arginine 152 each contribute to the substrate site. Catalysis depends on histidine 176, which acts as the Proton acceptor.

This sequence belongs to the LDH/MDH superfamily. MDH type 3 family.

It catalyses the reaction (S)-malate + NAD(+) = oxaloacetate + NADH + H(+). In terms of biological role, catalyzes the reversible oxidation of malate to oxaloacetate. In Rhodopseudomonas palustris (strain BisB18), this protein is Malate dehydrogenase 2.